The primary structure comprises 67 residues: MLKIKPAAGKAIRDPLTMKLLASEGEEKPRNSFWIRRLAAGDVVEVGSTENTADDTDAAPKKRSKSK.

The disordered stretch occupies residues 45–67; sequence EVGSTENTADDTDAAPKKRSKSK.

The protein localises to the virion. It localises to the host cytoplasm. Functionally, may possibly stop tail sheath polymerization by capping the polymerizing tail sheath once it has reached its requisite length and prevent its depolymerization. Probably interacts with both the tube and sheath proteins. The protein is Putative sheath terminator protein of Escherichia phage Mu (Bacteriophage Mu).